The sequence spans 46 residues: uncharacterized protein (46 aa).

This is an uncharacterized protein from Acidianus sp. F28 (AFV-2).